The chain runs to 2228 residues: Genome polyprotein (2228 aa).

The disordered stretch occupies residues Thr-55–Lys-76. Short sequence motifs ((L)YPX(n)L motif) lie at residues Tyr-167–Leu-171 and Tyr-200–Leu-205. An involved in P1-2A pentamerization region spans residues Met-766 to Gln-836. A helical membrane pass occupies residues Thr-1011–Ile-1031. Residues Ile-1043–Glu-1070 are membrane-penetrating ability. Positions Asn-1127–Cys-1153 form a coiled coil. The 163-residue stretch at His-1204–Met-1366 folds into the SF3 helicase domain. Gly-1230 to Ser-1237 is a binding site for ATP. A helical membrane pass occupies residues Trp-1462–Tyr-1482. Tyr-1499 bears the O-(5'-phospho-RNA)-tyrosine mark. A Peptidase C3 domain is found at Asp-1514 to Phe-1728. Catalysis depends on for protease 3C activity residues His-1563, Asp-1603, and Cys-1691. Positions Asp-1977–Asn-2098 constitute a RdRp catalytic domain.

It belongs to the picornaviridae polyprotein family. As to quaternary structure, homodimer. Homomultimer; probably interacts with membranes in a multimeric form. Seems to assemble into amyloid-like fibers. In terms of assembly, homodimer. Monomer. Interacts with protein 3CD. Interacts with host ACBD3. As to quaternary structure, interacts with protein 3AB. In terms of assembly, interacts with human MAVS. Homodimer; disulfide-linked. As to quaternary structure, homopentamer. Homooligomer. In terms of assembly, interacts with capsid protein VP2. Interacts with capsid protein VP3. Interacts with capsid protein VP1. Interacts with capsid protein VP3. As to quaternary structure, interacts with capsid protein VP1. Interacts with capsid protein VP2. Specific enzymatic cleavages by viral protease in vivo yield a variety of precursors and mature proteins. Polyprotein processing intermediates are produced, such as P1-2A which is a functional precursor of the structural proteins, VP0 which is a VP4-VP2 precursor, VP1-2A precursor, 3ABC precursor which is a stable and catalytically active precursor of 3A, 3B and 3C proteins, 3AB and 3CD precursors. The assembly signal 2A is removed from VP1-2A by a host protease, possibly host Cathepsin L. This cleavage occurs over a region of 3 amino-acids probably generating VP1 proteins with heterogeneous C-termini. In terms of processing, during virion maturation, immature virions are rendered infectious following cleavage of VP0 into VP4 and VP2. This maturation seems to be an autocatalytic event triggered by the presence of RNA in the capsid and is followed by a conformational change of the particle. Post-translationally, the assembly signal 2A is removed from VP1-2A by a host protease, possibly host Cathepsin L in naked virions. This cleavage does not occur in enveloped virions. This cleavage occurs over a region of 3 amino-acids probably generating VP1 proteins with heterogeneous C-termini. VPg is uridylylated prior to priming replication into VPg-pUpU. In terms of processing, unlike other picornaviruses, does not seem to be myristoylated.

It localises to the virion. The protein resides in the host endosome. It is found in the host multivesicular body. The protein localises to the host membrane. Its subcellular location is the host mitochondrion outer membrane. It localises to the host cytoplasm. The protein resides in the host cytoplasmic vesicle membrane. The enzyme catalyses RNA(n) + a ribonucleoside 5'-triphosphate = RNA(n+1) + diphosphate. It catalyses the reaction a ribonucleoside 5'-triphosphate + H2O = a ribonucleoside 5'-diphosphate + phosphate + H(+). It carries out the reaction Selective cleavage of Gln-|-Gly bond in the poliovirus polyprotein. In other picornavirus reactions Glu may be substituted for Gln, and Ser or Thr for Gly.. In terms of biological role, capsid proteins VP1, VP2, and VP3 form a closed capsid enclosing the viral positive strand RNA genome. All these proteins contain a beta-sheet structure called beta-barrel jelly roll. Together they form an icosahedral capsid (T=3) composed of 60 copies of each VP1, VP2, and VP3, with a diameter of approximately 300 Angstroms. VP1 is situated at the 12 fivefold axes, whereas VP2 and VP3 are located at the quasi-sixfold axes. The naked capsid interacts with the host receptor HAVCR1 to provide virion attachment to and probably entry into the target cell. Functionally, VP0 precursor is a component of the immature procapsids. Plays a role in the assembly of the 12 pentamers into an icosahedral structure. Has not been detected in mature virions, supposedly owing to its small size. Its function is as follows. Precursor component of immature procapsids that corresponds to an extended form of the structural protein VP1. After maturation, possibly by the host Cathepsin L, the assembly signal 2A is cleaved to give rise to the mature VP1 protein. In terms of biological role, functions as a viroporin. Affects membrane integrity and causes an increase in membrane permeability. Involved in host intracellular membrane rearrangements probably to give rise to the viral factories. Does not disrupt calcium homeostasis or glycoprotein trafficking. Antagonizes the innate immune response of the host by suppressing IFN-beta synthesis, which it achieves by interfering with the RIG-I/IFIH1 pathway. Functionally, affects membrane integrity and causes an increase in membrane permeability. Associates with and induces structural rearrangements of intracellular membranes. Displays RNA-binding activity. Its function is as follows. The precursor 3ABC is targeted to the mitochondrial membrane where protease 3C activity cleaves and inhibits the host antiviral protein MAVS, thereby disrupting activation of IRF3 through the IFIH1/MDA5 pathway. In vivo, the protease activity of 3ABC precursor is more efficient in cleaving the 2BC precursor than that of protein 3C. The 3ABC precursor may therefore play a role in the proteolytic processing of the polyprotein. Possible viroporin. In terms of biological role, interacts with the 3CD precursor and with RNA structures found at both the 5'- and 3'-termini of the viral genome. Since the 3AB precursor contains the hydrophobic domain 3A, it probably anchors the whole viral replicase complex to intracellular membranes on which viral RNA synthesis occurs. Functionally, may serve as membrane anchor to the 3AB and 3ABC precursors via its hydrophobic domain. May interact with RNA. Acts as a primer for viral RNA replication and remains covalently bound to viral genomic RNA. VPg is uridylylated prior to priming replication into VPg-pUpU. The VPg-pUpU is then used as primer on the genomic RNA poly(A) by the RNA-dependent RNA polymerase to replicate the viral genome. Its function is as follows. Cysteine protease that generates mature viral proteins from the precursor polyprotein. In addition to its proteolytic activity, it binds to viral RNA, and thus influences viral genome replication. RNA and substrate bind cooperatively to the protease. Cleaves IKBKG/NEMO to impair innate immune signaling. Cleaves host PABPC1 which may participate in the switch of viral translation to RNA synthesis. In terms of biological role, interacts with the 3AB precursor and with RNA structures found at both the 5'- and 3'-termini of the viral genome. Disrupts TLR3 signaling by degrading the host adapter protein TICAM1/TRIF. Functionally, RNA-directed RNA polymerase 3D-POL replicates genomic and antigenomic RNA by recognizing replications specific signals. The sequence is that of Genome polyprotein from Human hepatitis A virus genotype IIIA (isolate NOR-21) (HHAV).